A 410-amino-acid chain; its full sequence is Translation initiation factor 2 subunit gamma (410 aa).

Residues 9–202 (QAEVNIGMVG…AIEEFIPTPE (194 aa)) form the tr-type G domain. The G1 stretch occupies residues 18–25 (GHVDHGKT). Residues Asp-21, Thr-25, Gly-46, and Thr-48 each contribute to the Mg(2+) site. Residue 21-26 (DHGKTT) coordinates GTP. The tract at residues 46–50 (GITIK) is G2. Positions 61, 64, 73, and 76 each coordinate Zn(2+). The G3 stretch occupies residues 90–93 (DAPG). Residues 145-148 (NKIE) and 180-182 (SAL) contribute to the GTP site. The G4 stretch occupies residues 145-148 (NKIE). The interval 180 to 182 (SAL) is G5.

This sequence belongs to the TRAFAC class translation factor GTPase superfamily. Classic translation factor GTPase family. EIF2G subfamily. In terms of assembly, heterotrimer composed of an alpha, a beta and a gamma chain. Mg(2+) is required as a cofactor.

The catalysed reaction is GTP + H2O = GDP + phosphate + H(+). Its function is as follows. eIF-2 functions in the early steps of protein synthesis by forming a ternary complex with GTP and initiator tRNA. The polypeptide is Translation initiation factor 2 subunit gamma (Thermococcus onnurineus (strain NA1)).